Here is a 345-residue protein sequence, read N- to C-terminus: Methionine import ATP-binding protein MetN (345 aa).

The region spanning 2-241 (IKLNNIXKIF…PKTELAQEFI (240 aa)) is the ABC transporter domain. 38–45 (GASGAGKS) is an ATP binding site.

Belongs to the ABC transporter superfamily. Methionine importer (TC 3.A.1.24) family. The complex is composed of two ATP-binding proteins (MetN), two transmembrane proteins (MetI) and a solute-binding protein (MetQ).

It localises to the cell inner membrane. It carries out the reaction L-methionine(out) + ATP + H2O = L-methionine(in) + ADP + phosphate + H(+). The enzyme catalyses D-methionine(out) + ATP + H2O = D-methionine(in) + ADP + phosphate + H(+). Part of the ABC transporter complex MetNIQ involved in methionine import. Responsible for energy coupling to the transport system. The chain is Methionine import ATP-binding protein MetN from Haemophilus influenzae (strain ATCC 51907 / DSM 11121 / KW20 / Rd).